Reading from the N-terminus, the 525-residue chain is ATP synthase subunit alpha (525 aa).

172–179 contacts ATP; sequence GDRQTGKT.

This sequence belongs to the ATPase alpha/beta chains family. As to quaternary structure, F-type ATPases have 2 components, CF(1) - the catalytic core - and CF(0) - the membrane proton channel. CF(1) has five subunits: alpha(3), beta(3), gamma(1), delta(1), epsilon(1). CF(0) has three main subunits: a(1), b(2) and c(9-12). The alpha and beta chains form an alternating ring which encloses part of the gamma chain. CF(1) is attached to CF(0) by a central stalk formed by the gamma and epsilon chains, while a peripheral stalk is formed by the delta and b chains.

Its subcellular location is the cell inner membrane. The catalysed reaction is ATP + H2O + 4 H(+)(in) = ADP + phosphate + 5 H(+)(out). Produces ATP from ADP in the presence of a proton gradient across the membrane. The alpha chain is a regulatory subunit. In Parabacteroides distasonis (strain ATCC 8503 / DSM 20701 / CIP 104284 / JCM 5825 / NCTC 11152), this protein is ATP synthase subunit alpha.